Consider the following 340-residue polypeptide: Sodium/bile acid cotransporter 7 (340 aa).

The Cytoplasmic segment spans residues 1–10 (MRLLERVRKE). The helical transmembrane segment at 11 to 31 (WFMVGIVVAIGAAKLEPSVGV) threads the bilayer. Over 32-37 (NGGPLK) the chain is Extracellular. The helical transmembrane segment at 38 to 58 (PEITVSYIAVATIFFNSGLSL) threads the bilayer. Residues 59 to 71 (KTEELTSALVHLK) are Cytoplasmic-facing. A helical transmembrane segment spans residues 72–92 (LHLFIQVFTLAFFPTTIWLFL). At 93-116 (QLLSVTSINEWLLKGLQTVGCMPP) the chain is on the extracellular side. The chain crosses the membrane as a helical span at residues 117-137 (PVSSAVILTKAVGGNEAAAIF). A topological domain (cytoplasmic) is located at residue Asn-138. Residues 139–159 (SAFGSFLGIVVTPVLLLLFLG) traverse the membrane as a helical segment. The Extracellular portion of the chain corresponds to 160–163 (SSSS). A helical transmembrane segment spans residues 164-184 (VPFTSIFSQLFMTVVVPLVIG). Over 185–201 (QIVRRYIKDWLERKKPP) the chain is Cytoplasmic. The helical transmembrane segment at 202–222 (FGVVSSSVLLMIIYTTFCDTF) threads the bilayer. The Extracellular segment spans residues 223-234 (SNPNIDLDKFSL). A helical transmembrane segment spans residues 235–255 (ILILFIIVSIQLSFMLLTFVF). Residues 256-270 (STRNNSGFTPADTVA) are Cytoplasmic-facing. The chain crosses the membrane as a helical span at residues 271–291 (IIFCSTHKSLTLGIPMLKIVF). Residues 292–298 (AGHEHLS) lie on the Extracellular side of the membrane. A helical transmembrane segment spans residues 299 to 319 (LISLPLLIYHPAQILLGSVLV). At 320-340 (PTIKSWMVSRQKGVKLTRPTV) the chain is on the cytoplasmic side.

This sequence belongs to the bile acid:sodium symporter (BASS) (TC 2.A.28) family. In terms of tissue distribution, strongly expressed in liver, adrenal gland, small intestine and colon. Moderately expressed in heart, lung, kidney and spleen. Weakly expressed in brain.

It localises to the cell membrane. It is found in the endoplasmic reticulum membrane. Its subcellular location is the golgi apparatus membrane. In terms of biological role, involved in teeth and skeletal development. Has an essential role in the biosynthesis and trafficking of glycosaminoglycans and glycoproteins to produce a proper functioning extracellular matrix. Required for extracellular matrix mineralization. Also involved in the regulation of cellular calcium homeostasis. Does not show transport activity towards bile acids or steroid sulfates (including taurocholate, cholate, chenodeoxycholate, estrone-3-sulfate, dehydroepiandrosterone sulfate (DHEAS) and pregnenolone sulfate). The sequence is that of Sodium/bile acid cotransporter 7 (Slc10a7) from Rattus norvegicus (Rat).